We begin with the raw amino-acid sequence, 618 residues long: Dihydroxy-acid dehydratase (618 aa).

Position 81 (D81) interacts with Mg(2+). C122 contributes to the [2Fe-2S] cluster binding site. Positions 123 and 124 each coordinate Mg(2+). K124 carries the post-translational modification N6-carboxylysine. Residue C195 coordinates [2Fe-2S] cluster. E490 lines the Mg(2+) pocket. The Proton acceptor role is filled by S516.

The protein belongs to the IlvD/Edd family. In terms of assembly, homodimer. It depends on [2Fe-2S] cluster as a cofactor. The cofactor is Mg(2+).

The catalysed reaction is (2R)-2,3-dihydroxy-3-methylbutanoate = 3-methyl-2-oxobutanoate + H2O. The enzyme catalyses (2R,3R)-2,3-dihydroxy-3-methylpentanoate = (S)-3-methyl-2-oxopentanoate + H2O. Its pathway is amino-acid biosynthesis; L-isoleucine biosynthesis; L-isoleucine from 2-oxobutanoate: step 3/4. The protein operates within amino-acid biosynthesis; L-valine biosynthesis; L-valine from pyruvate: step 3/4. Functions in the biosynthesis of branched-chain amino acids. Catalyzes the dehydration of (2R,3R)-2,3-dihydroxy-3-methylpentanoate (2,3-dihydroxy-3-methylvalerate) into 2-oxo-3-methylpentanoate (2-oxo-3-methylvalerate) and of (2R)-2,3-dihydroxy-3-methylbutanoate (2,3-dihydroxyisovalerate) into 2-oxo-3-methylbutanoate (2-oxoisovalerate), the penultimate precursor to L-isoleucine and L-valine, respectively. The protein is Dihydroxy-acid dehydratase of Gluconobacter oxydans (strain 621H) (Gluconobacter suboxydans).